A 467-amino-acid chain; its full sequence is Ribulose bisphosphate carboxylase large chain (467 aa).

Residues 1–2 (MS) constitute a propeptide that is removed on maturation. Pro-3 is modified (N-acetylproline). Lys-14 bears the N6,N6,N6-trimethyllysine mark. Asn-123 and Thr-173 together coordinate substrate. Lys-175 functions as the Proton acceptor in the catalytic mechanism. Lys-177 is a binding site for substrate. Lys-201, Asp-203, and Glu-204 together coordinate Mg(2+). At Lys-201 the chain carries N6-carboxylysine. Catalysis depends on His-294, which acts as the Proton acceptor. 3 residues coordinate substrate: Arg-295, His-327, and Ser-379.

This sequence belongs to the RuBisCO large chain family. Type I subfamily. In terms of assembly, heterohexadecamer of 8 large chains and 8 small chains; disulfide-linked. The disulfide link is formed within the large subunit homodimers. Mg(2+) serves as cofactor. Post-translationally, the disulfide bond which can form in the large chain dimeric partners within the hexadecamer appears to be associated with oxidative stress and protein turnover.

The protein localises to the plastid. It is found in the chloroplast. The enzyme catalyses 2 (2R)-3-phosphoglycerate + 2 H(+) = D-ribulose 1,5-bisphosphate + CO2 + H2O. It catalyses the reaction D-ribulose 1,5-bisphosphate + O2 = 2-phosphoglycolate + (2R)-3-phosphoglycerate + 2 H(+). In terms of biological role, ruBisCO catalyzes two reactions: the carboxylation of D-ribulose 1,5-bisphosphate, the primary event in carbon dioxide fixation, as well as the oxidative fragmentation of the pentose substrate in the photorespiration process. Both reactions occur simultaneously and in competition at the same active site. In Serenoa repens (Saw palmetto), this protein is Ribulose bisphosphate carboxylase large chain.